The primary structure comprises 481 residues: Keratin, type II cuticular Hb1 (481 aa).

Positions 1-106 (MTCGSGFCGR…PNAQCVKHEE (106 aa)) are head. One can recognise an IF rod domain in the interval 106–417 (EKEQIKCLNS…RLLEGEEQRL (312 aa)). The segment at 107–141 (KEQIKCLNSKFAAFIDKVRFLEQQNKLLETKWQFY) is coil 1A. Residues 142-151 (QNRKCCESNM) form a linker 1 region. The tract at residues 152–252 (EPLFEGYIEA…YDEETRILHS (101 aa)) is coil 1B. Lysine 212 participates in a covalent cross-link: Glycyl lysine isopeptide (Lys-Gly) (interchain with G-Cter in SUMO1). The segment at 253–269 (HISDTSIVVKMDNSRDL) is linker 12. The coil 2 stretch occupies residues 270 to 413 (NMDCVVAEIK…TTYRRLLEGE (144 aa)). Residues 414-481 (EQRLCEGVGA…GSAVSCGRKC (68 aa)) are tail.

Belongs to the intermediate filament family. As to quaternary structure, heterotetramer of two type I and two type II keratins. Expressed in dorsal skin.

In Mus musculus (Mouse), this protein is Keratin, type II cuticular Hb1.